We begin with the raw amino-acid sequence, 250 residues long: Probable transcriptional regulatory protein tll0175 (250 aa).

This sequence belongs to the TACO1 family.

It localises to the cytoplasm. In Thermosynechococcus vestitus (strain NIES-2133 / IAM M-273 / BP-1), this protein is Probable transcriptional regulatory protein tll0175.